Here is a 216-residue protein sequence, read N- to C-terminus: Talanin (216 aa).

As to expression, isoform 4 is expressed in placenta, lung, kidney and pancreas.

In terms of biological role, may play a role in uric acid excretion. In Homo sapiens (Human), this protein is Talanin (ZNF365).